Consider the following 369-residue polypeptide: MMTMLRGWITMIVMLTAINAQAACSWPAWEQFKKDYISQQGRVIDPGDARKITTSEGQSYAMFFALAANDRPAFAQLFNWTQNNLAQGSLREHLPAWLWGQKDPDTWSVLDSNSASDGDIWMAWSLLEAGRLWKETRYTEVGTALLKRIAREEVVNVPGLGSMLLPGKIGFAEANSWRFNPSYLPPQLAQYFSRFGAPWSTLRETNLRLLLETSPKGFSPDWVRYESKQGWQLKAEKTLISSYDAIRVYLWTGMMHDGDPQKARLLARFKPMATLTMKNGVPPEKVDVVSGNAQGTGPVGFSAALLPFLQNRGAQAVQRQRVADHFPGSDAYYNYVLTLFGQGWDQHRFRFTVKGELLPDWGQECVSSR.

The signal sequence occupies residues M1–A22. The active-site Proton donor is the E56. The Nucleophile role is filled by D117.

This sequence belongs to the glycosyl hydrolase 8 (cellulase D) family.

Its subcellular location is the secreted. It carries out the reaction Endohydrolysis of (1-&gt;4)-beta-D-glucosidic linkages in cellulose, lichenin and cereal beta-D-glucans.. The protein operates within glycan metabolism; bacterial cellulose biosynthesis. Functionally, hydrolyzes carboxymethylcellulose. The polypeptide is Endoglucanase (bcsZ) (Salmonella typhi).